The primary structure comprises 114 residues: UPF0145 protein TT_C1581 (114 aa).

This sequence belongs to the UPF0145 family.

This Thermus thermophilus (strain ATCC BAA-163 / DSM 7039 / HB27) protein is UPF0145 protein TT_C1581.